The following is a 207-amino-acid chain: Dephospho-CoA kinase (207 aa).

The region spanning Ile-10–Pro-207 is the DPCK domain. Gly-18–Ala-23 serves as a coordination point for ATP.

Belongs to the CoaE family.

The protein resides in the cytoplasm. The catalysed reaction is 3'-dephospho-CoA + ATP = ADP + CoA + H(+). Its pathway is cofactor biosynthesis; coenzyme A biosynthesis; CoA from (R)-pantothenate: step 5/5. In terms of biological role, catalyzes the phosphorylation of the 3'-hydroxyl group of dephosphocoenzyme A to form coenzyme A. This Pseudomonas putida (Arthrobacter siderocapsulatus) protein is Dephospho-CoA kinase.